The sequence spans 192 residues: Ras-like GTP-binding protein O-RHO (192 aa).

12–19 (GDGACGKT) contributes to the GTP binding site. An Effector region motif is present at residues 34–42 (YVPTVFENY). GTP-binding positions include 59-63 (DTAGQ) and 117-120 (NKKT). At Cys189 the chain carries Cysteine methyl ester. A lipid anchor (S-geranylgeranyl cysteine) is attached at Cys189. The propeptide at 190-192 (LLL) is removed in mature form.

It belongs to the small GTPase superfamily. Rho family.

The protein localises to the cell membrane. This is Ras-like GTP-binding protein O-RHO from Diplobatis ommata (Ocellated electric ray).